The chain runs to 496 residues: Beta-amylase (496 aa).

Substrate contacts are provided by Asp54, His94, and Asp102. Residue Glu187 is the Proton donor of the active site. Substrate contacts are provided by Lys296, His301, and Thr343. Glu381 (proton acceptor) is an active-site residue. Substrate-binding positions include 382–383 and Arg421; that span reads NA.

This sequence belongs to the glycosyl hydrolase 14 family.

The enzyme catalyses Hydrolysis of (1-&gt;4)-alpha-D-glucosidic linkages in polysaccharides so as to remove successive maltose units from the non-reducing ends of the chains.. This Vigna unguiculata (Cowpea) protein is Beta-amylase (BMY1).